The following is a 222-amino-acid chain: Niacin transporter NiaX (222 aa).

5 helical membrane-spanning segments follow: residues Asn-34–Val-54, Met-72–Met-94, Thr-101–Leu-120, Ile-135–Phe-155, and Ala-167–Phe-187.

Belongs to the vitamin uptake transporter (VUT/ECF) (TC 2.A.88) family. In L.lactis forms a stable complex with EcfA, EcfA' and EcfT. In E.coli forms a stable energy-coupling factor (ECF) transporter complex composed of 2 membrane-embedded substrate-binding proteins (S component), 2 ATP-binding proteins (A and A' components) and 2 transmembrane proteins (T component), probably with a stoichiometry of 2:1:1:2. May be able to interact with more than 1 S component at a time.

Its subcellular location is the cell membrane. Functionally, probably a niacin-binding protein that interacts with the energy-coupling factor (ECF) ABC-transporter complex. Unlike classic ABC transporters this ECF transporter provides the energy necessary to transport a number of different substrates. The substrates themselves are bound by transmembrane, not extracytoplasmic soluble proteins. Uptake of niacin into proteosomes containing EcfA1A2T and Niax has been demonstrated. Uptake requires hydrolyzable Mg-ATP and is substrate-specific; NiaX-containing proteosomes did not transport riboflavin. This is Niacin transporter NiaX (niaX) from Lactococcus lactis subsp. cremoris (strain MG1363).